Consider the following 183-residue polypeptide: Holliday junction branch migration complex subunit RuvA (183 aa).

A domain I region spans residues Met1–Leu63. The segment at Glu64 to Ala139 is domain II. Position 139 (Ala139) is a region of interest, flexible linker. The tract at residues Ala139–Ser183 is domain III.

Belongs to the RuvA family. Homotetramer. Forms an RuvA(8)-RuvB(12)-Holliday junction (HJ) complex. HJ DNA is sandwiched between 2 RuvA tetramers; dsDNA enters through RuvA and exits via RuvB. An RuvB hexamer assembles on each DNA strand where it exits the tetramer. Each RuvB hexamer is contacted by two RuvA subunits (via domain III) on 2 adjacent RuvB subunits; this complex drives branch migration. In the full resolvosome a probable DNA-RuvA(4)-RuvB(12)-RuvC(2) complex forms which resolves the HJ.

The protein resides in the cytoplasm. Functionally, the RuvA-RuvB-RuvC complex processes Holliday junction (HJ) DNA during genetic recombination and DNA repair, while the RuvA-RuvB complex plays an important role in the rescue of blocked DNA replication forks via replication fork reversal (RFR). RuvA specifically binds to HJ cruciform DNA, conferring on it an open structure. The RuvB hexamer acts as an ATP-dependent pump, pulling dsDNA into and through the RuvAB complex. HJ branch migration allows RuvC to scan DNA until it finds its consensus sequence, where it cleaves and resolves the cruciform DNA. This Helicobacter pylori (strain J99 / ATCC 700824) (Campylobacter pylori J99) protein is Holliday junction branch migration complex subunit RuvA.